The sequence spans 325 residues: MENNELLDITLRPKSLKEFIGQKKIKDNIEVFIKAALIRQEPLDHVLFCGPPGLGKTTLATVIANELGVNIKSTSGPVLERAGDVAAILTNLSDRDILFIDEIHRLPRMVEEILYPAMEDFTLDIIVGQGPSARSIKINLPRFTLIGATTRTGLITSPLRDRFGVVFRLEFYNSEELKEIVKRSARILGILIEENAATEIARRSRGTPRVANRLLKRIRDFAQVKDKDIIDLQIAQEALIAMDVDDYGLDDMDRKILLTIIEKFNGGPAGIESIAASLREDKDTIEDVYEPYLMQEGFIERTARGRVATRFAYEVLKRKIPERLF.

Residues 1–172 (MENNELLDIT…FGVVFRLEFY (172 aa)) form a large ATPase domain (RuvB-L) region. ATP-binding positions include leucine 11, arginine 12, glycine 53, lysine 56, threonine 57, threonine 58, 119-121 (EDF), arginine 162, tyrosine 172, and arginine 209. Threonine 57 lines the Mg(2+) pocket. Residues 173–243 (NSEELKEIVK…IAQEALIAMD (71 aa)) form a small ATPAse domain (RuvB-S) region. The head domain (RuvB-H) stretch occupies residues 246–325 (DYGLDDMDRK…LKRKIPERLF (80 aa)). Residues arginine 301 and arginine 306 each coordinate DNA.

It belongs to the RuvB family. As to quaternary structure, homohexamer. Forms an RuvA(8)-RuvB(12)-Holliday junction (HJ) complex. HJ DNA is sandwiched between 2 RuvA tetramers; dsDNA enters through RuvA and exits via RuvB. An RuvB hexamer assembles on each DNA strand where it exits the tetramer. Each RuvB hexamer is contacted by two RuvA subunits (via domain III) on 2 adjacent RuvB subunits; this complex drives branch migration. In the full resolvosome a probable DNA-RuvA(4)-RuvB(12)-RuvC(2) complex forms which resolves the HJ.

Its subcellular location is the cytoplasm. It carries out the reaction ATP + H2O = ADP + phosphate + H(+). Its function is as follows. The RuvA-RuvB-RuvC complex processes Holliday junction (HJ) DNA during genetic recombination and DNA repair, while the RuvA-RuvB complex plays an important role in the rescue of blocked DNA replication forks via replication fork reversal (RFR). RuvA specifically binds to HJ cruciform DNA, conferring on it an open structure. The RuvB hexamer acts as an ATP-dependent pump, pulling dsDNA into and through the RuvAB complex. RuvB forms 2 homohexamers on either side of HJ DNA bound by 1 or 2 RuvA tetramers; 4 subunits per hexamer contact DNA at a time. Coordinated motions by a converter formed by DNA-disengaged RuvB subunits stimulates ATP hydrolysis and nucleotide exchange. Immobilization of the converter enables RuvB to convert the ATP-contained energy into a lever motion, pulling 2 nucleotides of DNA out of the RuvA tetramer per ATP hydrolyzed, thus driving DNA branch migration. The RuvB motors rotate together with the DNA substrate, which together with the progressing nucleotide cycle form the mechanistic basis for DNA recombination by continuous HJ branch migration. Branch migration allows RuvC to scan DNA until it finds its consensus sequence, where it cleaves and resolves cruciform DNA. The chain is Holliday junction branch migration complex subunit RuvB from Thermodesulfovibrio yellowstonii (strain ATCC 51303 / DSM 11347 / YP87).